The chain runs to 473 residues: MKTDTSTFLAQQIVRLRRRDQIRRLMQRDKTPLAILFMAAVVGTLTGLVGVAFEKAVSWVQNMRIGALVQVADHAFLLWPLAFILSALLAMVGYFLVRKFAPEAGGSGIPEIEGALEELRPVRWWRVLPVKFIGGMGTLGAGMVLGREGPTVQIGGNLGRMVLDVFRMRSAEARHTLLATGAAAGLSAAFNAPLAGILFIIEEMRPQFRYNLISIKAVFTGVIMSSIVFRIFNGEAPIIEVGKLSDAPVNTLWLYLILGIIFGCVGPVFNSLVLRTQDMFQRFHGGEIKKWVLMGGAIGGLCGILGLIEPAAAGGGFNLIPIAAAGNFSVGLLLFIFITRVVTTLLCFSSGAPGGIFAPMLALGTLLGTAFGMAAAVLFPQYHLEAGTFAIAGMGALMAASVRAPLTGIVLVLEMTDNYQLILPMIITCLGATLLAQFLGGKPLYSTILARTLAKQDAEQAEKNQNAPADENT.

The Cytoplasmic segment spans residues 1–32; it reads MKTDTSTFLAQQIVRLRRRDQIRRLMQRDKTP. A helical membrane pass occupies residues 33-69; that stretch reads LAILFMAAVVGTLTGLVGVAFEKAVSWVQNMRIGALV. Residues 70-76 are Periplasmic-facing; the sequence is QVADHAF. Residues 77–100 form a helical membrane-spanning segment; sequence LLWPLAFILSALLAMVGYFLVRKF. The Selectivity filter part_1 signature appears at 106-110; that stretch reads GSGIP. Ser-107 is a binding site for chloride. The segment at residues 109 to 116 is an intramembrane region (helical); it reads IPEIEGAL. The Cytoplasmic segment spans residues 117 to 123; the sequence is EELRPVR. 2 helical membrane-spanning segments follow: residues 124-141 and 148-166; these read WWRV…TLGA and EGPT…LDVF. Residues 146 to 150 carry the Selectivity filter part_2 motif; the sequence is GREGP. The Cytoplasmic segment spans residues 167 to 176; that stretch reads RMRSAEARHT. The segment at residues 177–189 is an intramembrane region (helical); it reads LLATGAAAGLSAA. Positions 190-192 form an intramembrane region, note=Loop between two helices; the sequence is FNA. The helical intramembrane region spans 193 to 201; the sequence is PLAGILFII. Over 202–214 the chain is Cytoplasmic; the sequence is EEMRPQFRYNLIS. A helical membrane pass occupies residues 215–232; it reads IKAVFTGVIMSSIVFRIF. The Periplasmic portion of the chain corresponds to 233 to 252; it reads NGEAPIIEVGKLSDAPVNTL. The helical transmembrane segment at 253–281 threads the bilayer; sequence WLYLILGIIFGCVGPVFNSLVLRTQDMFQ. The Cytoplasmic segment spans residues 282–287; the sequence is RFHGGE. A helical membrane pass occupies residues 288-308; that stretch reads IKKWVLMGGAIGGLCGILGLI. The Periplasmic segment spans residues 309 to 329; sequence EPAAAGGGFNLIPIAAAGNFS. Residues 330–349 form a helical membrane-spanning segment; that stretch reads VGLLLFIFITRVVTTLLCFS. The Cytoplasmic portion of the chain corresponds to 350-354; sequence SGAPG. Positions 355-359 match the Selectivity filter part_3 motif; that stretch reads GIFAP. The chain crosses the membrane as a helical span at residues 355 to 378; it reads GIFAPMLALGTLLGTAFGMAAAVL. Residues Ile-356 and Phe-357 each contribute to the chloride site. The Periplasmic segment spans residues 379 to 386; the sequence is FPQYHLEA. The helical intramembrane region spans 387–401; that stretch reads GTFAIAGMGALMAAS. The segment at residues 402 to 404 is an intramembrane region (note=Loop between two helices); that stretch reads VRA. Residues 405–416 constitute an intramembrane region (helical); that stretch reads PLTGIVLVLEMT. The note=Loop between two helices intramembrane region spans 417–421; that stretch reads DNYQL. Residues 422–438 traverse the membrane as a helical segment; sequence ILPMIITCLGATLLAQF. The Cytoplasmic portion of the chain corresponds to 439–473; it reads LGGKPLYSTILARTLAKQDAEQAEKNQNAPADENT. Chloride is bound at residue Tyr-445.

It belongs to the chloride channel (TC 2.A.49) family. ClcA subfamily. In terms of assembly, homodimer.

It is found in the cell inner membrane. It catalyses the reaction 2 chloride(in) + H(+)(out) = 2 chloride(out) + H(+)(in). Its function is as follows. Proton-coupled chloride transporter. Functions as antiport system and exchanges two chloride ions for 1 proton. Probably acts as an electrical shunt for an outwardly-directed proton pump that is linked to amino acid decarboxylation, as part of the extreme acid resistance (XAR) response. This chain is H(+)/Cl(-) exchange transporter ClcA (clcA), found in Salmonella typhimurium (strain LT2 / SGSC1412 / ATCC 700720).